The primary structure comprises 178 residues: Interleukin-10 (178 aa).

The first 18 residues, 1 to 18 (MPGSALLCCLLLLAGVKT), serve as a signal peptide directing secretion. N-linked (GlcNAc...) asparagine glycosylation is present at asparagine 29. 2 disulfides stabilise this stretch: cysteine 30/cysteine 126 and cysteine 80/cysteine 132. Residue asparagine 134 is glycosylated (N-linked (GlcNAc...) asparagine).

Belongs to the IL-10 family. In terms of assembly, homodimer. Interacts with IL10RA and IL10RB.

It localises to the secreted. Major immune regulatory cytokine that acts on many cells of the immune system where it has profound anti-inflammatory functions, limiting excessive tissue disruption caused by inflammation. Mechanistically, IL10 binds to its heterotetrameric receptor comprising IL10RA and IL10RB leading to JAK1 and STAT2-mediated phosphorylation of STAT3. In turn, STAT3 translocates to the nucleus where it drives expression of anti-inflammatory mediators. Targets antigen-presenting cells (APCs) such as macrophages and monocytes and inhibits their release of pro-inflammatory cytokines including granulocyte-macrophage colony-stimulating factor /GM-CSF, granulocyte colony-stimulating factor/G-CSF, IL-1 alpha, IL-1 beta, IL-6, IL-8 and TNF-alpha. Also interferes with antigen presentation by reducing the expression of MHC-class II and co-stimulatory molecules, thereby inhibiting their ability to induce T cell activation. In addition, controls the inflammatory response of macrophages by reprogramming essential metabolic pathways including mTOR signaling. This Rattus norvegicus (Rat) protein is Interleukin-10 (Il10).